The sequence spans 196 residues: Pyridoxal 5'-phosphate synthase subunit PdxT (196 aa).

An L-glutamine-binding site is contributed by 47 to 49 (GES). Cys-79 functions as the Nucleophile in the catalytic mechanism. L-glutamine contacts are provided by residues Arg-106 and 134 to 135 (IR). Residues His-170 and Glu-172 each act as charge relay system in the active site.

The protein belongs to the glutaminase PdxT/SNO family. As to quaternary structure, in the presence of PdxS, forms a dodecamer of heterodimers. Only shows activity in the heterodimer.

The catalysed reaction is aldehydo-D-ribose 5-phosphate + D-glyceraldehyde 3-phosphate + L-glutamine = pyridoxal 5'-phosphate + L-glutamate + phosphate + 3 H2O + H(+). The enzyme catalyses L-glutamine + H2O = L-glutamate + NH4(+). Its pathway is cofactor biosynthesis; pyridoxal 5'-phosphate biosynthesis. Catalyzes the hydrolysis of glutamine to glutamate and ammonia as part of the biosynthesis of pyridoxal 5'-phosphate. The resulting ammonia molecule is channeled to the active site of PdxS. The sequence is that of Pyridoxal 5'-phosphate synthase subunit PdxT from Halalkalibacterium halodurans (strain ATCC BAA-125 / DSM 18197 / FERM 7344 / JCM 9153 / C-125) (Bacillus halodurans).